Reading from the N-terminus, the 1669-residue chain is Collagen alpha-1(IV) chain (1669 aa).

Positions M1 to A27 are cleaved as a signal peptide. The propeptide at K28 to K172 is N-terminal propeptide (7S domain). 3 disordered regions span residues K48–E459, G504–Q1382, and P1404–P1431. N126 carries N-linked (GlcNAc...) asparagine glycosylation. A triple-helical region region spans residues G173–P1440. The span at V196–P214 shows a compositional bias: pro residues. 3 positions are modified to 3-hydroxyproline: P204, P207, and P210. Over residues Q234–Q249 the composition is skewed to low complexity. Composition is skewed to basic and acidic residues over residues E250–K263 and P289–K298. Pro residues-rich tracts occupy residues P367–P376, P413–Q424, and P436–P448. Positions F535–D545 are enriched in basic and acidic residues. The segment covering G586–G595 has biased composition (gly residues). 3-hydroxyproline is present on residues P587 and P602. Position 603 is a 4-hydroxyproline (P603). Residue P605 is modified to 3-hydroxyproline. Residue P606 is modified to 4-hydroxyproline. Low complexity predominate over residues A611–A620. The segment covering G621 to G630 has biased composition (gly residues). A 4-hydroxyproline mark is found at P623, P626, P629, and P632. The residue at position 647 (P647) is a 3-hydroxyproline. A compositionally biased stretch (gly residues) spans G797 to G817. Composition is skewed to low complexity over residues Q856–P875 and P977–P986. The span at G1011–G1020 shows a compositional bias: gly residues. The span at S1086–P1114 shows a compositional bias: low complexity. Position 1214 is a 3-hydroxyproline (P1214). Positions P1247–L1258 are enriched in pro residues. Residues G1290 to G1299 show a composition bias toward gly residues. The span at P1368–Q1382 shows a compositional bias: low complexity. P1424 bears the 3-hydroxyproline mark. The region spanning G1445–T1669 is the Collagen IV NC1 domain. 6 disulfide bridges follow: C1460-C1551, C1493-C1548, C1505-C1511, C1570-C1665, C1604-C1662, and C1616-C1622. An S-Lysyl-methionine sulfilimine (Met-Lys) (interchain with K-1651) cross-link involves residue M1533. Residue K1651 forms an S-Lysyl-methionine sulfilimine (Lys-Met) (interchain with M-1533) linkage.

This sequence belongs to the type IV collagen family. In terms of assembly, there are six type IV collagen isoforms, alpha 1(IV)-alpha 6(IV), each of which can form a triple helix structure with 2 other chains to generate type IV collagen network. Interacts with EFEMP2. In terms of processing, lysines at the third position of the tripeptide repeating unit (G-X-Y) are hydroxylated. The modified lysines can be O-glycosylated. Contains 4-hydroxyproline. Prolines at the third position of the tripeptide repeating unit (G-X-Y) are hydroxylated in some or all of the chains. Post-translationally, contains 3-hydroxyproline. This modification occurs on the first proline residue in the sequence motif Gly-Pro-Hyp, where Hyp is 4-hydroxyproline. In terms of processing, type IV collagens contain numerous cysteine residues which are involved in inter- and intramolecular disulfide bonding. 12 of these, located in the NC1 domain, are conserved in all known type IV collagens. The trimeric structure of the NC1 domains is stabilized by covalent bonds (sulfilimine cross-links) between Lys and Met residues. These cross-links are important for the mechanical stability of the basement membrane. Sulfilimine cross-link is catalyzed by PXDN. Post-translationally, proteolytic processing produces the C-terminal NC1 peptide, arresten. In terms of tissue distribution, highly expressed in placenta.

The protein resides in the secreted. It is found in the extracellular space. The protein localises to the extracellular matrix. Its subcellular location is the basement membrane. In terms of biological role, type IV collagen is the major structural component of glomerular basement membranes (GBM), forming a 'chicken-wire' meshwork together with laminins, proteoglycans and entactin/nidogen. Arresten, comprising the C-terminal NC1 domain, inhibits angiogenesis and tumor formation. The C-terminal half is found to possess the anti-angiogenic activity. Specifically inhibits endothelial cell proliferation, migration and tube formation. The sequence is that of Collagen alpha-1(IV) chain from Homo sapiens (Human).